The primary structure comprises 233 residues: 5'-methylthioadenosine/S-adenosylhomocysteine nucleosidase (233 aa).

Residue Glu12 is the Proton acceptor of the active site. Substrate contacts are provided by residues Gly78, Ile156, and 177–178 (ME). Catalysis depends on Asp201, which acts as the Proton donor.

The protein belongs to the PNP/UDP phosphorylase family. MtnN subfamily.

It carries out the reaction S-adenosyl-L-homocysteine + H2O = S-(5-deoxy-D-ribos-5-yl)-L-homocysteine + adenine. The catalysed reaction is S-methyl-5'-thioadenosine + H2O = 5-(methylsulfanyl)-D-ribose + adenine. It catalyses the reaction 5'-deoxyadenosine + H2O = 5-deoxy-D-ribose + adenine. Its pathway is amino-acid biosynthesis; L-methionine biosynthesis via salvage pathway; S-methyl-5-thio-alpha-D-ribose 1-phosphate from S-methyl-5'-thioadenosine (hydrolase route): step 1/2. Catalyzes the irreversible cleavage of the glycosidic bond in both 5'-methylthioadenosine (MTA) and S-adenosylhomocysteine (SAH/AdoHcy) to adenine and the corresponding thioribose, 5'-methylthioribose and S-ribosylhomocysteine, respectively. Also cleaves 5'-deoxyadenosine, a toxic by-product of radical S-adenosylmethionine (SAM) enzymes, into 5-deoxyribose and adenine. In Listeria welshimeri serovar 6b (strain ATCC 35897 / DSM 20650 / CCUG 15529 / CIP 8149 / NCTC 11857 / SLCC 5334 / V8), this protein is 5'-methylthioadenosine/S-adenosylhomocysteine nucleosidase.